Here is a 502-residue protein sequence, read N- to C-terminus: Na(+)/H(+) antiporter NhaB (502 aa).

11 helical membrane-spanning segments follow: residues Ala-27 to Leu-49, Pro-66 to Phe-86, Val-95 to Tyr-115, Ile-128 to Leu-148, Thr-149 to Ala-169, Phe-241 to Ile-261, Ile-299 to Leu-318, Phe-350 to Ile-370, Met-394 to Val-414, Ala-450 to Ile-470, and Met-477 to Tyr-497.

The protein belongs to the NhaB Na(+)/H(+) (TC 2.A.34) antiporter family.

Its subcellular location is the cell inner membrane. The catalysed reaction is 2 Na(+)(in) + 3 H(+)(out) = 2 Na(+)(out) + 3 H(+)(in). Functionally, na(+)/H(+) antiporter that extrudes sodium in exchange for external protons. This Teredinibacter turnerae (strain ATCC 39867 / T7901) protein is Na(+)/H(+) antiporter NhaB.